Reading from the N-terminus, the 545-residue chain is CTP synthase (545 aa).

Positions 1–266 (MTTRYIFVTG…DDLVIKRFNL (266 aa)) are amidoligase domain. Ser-14 provides a ligand contact to CTP. A UTP-binding site is contributed by Ser-14. ATP-binding positions include 15 to 20 (SLGKGI) and Asp-72. Residues Asp-72 and Glu-140 each coordinate Mg(2+). CTP contacts are provided by residues 147–149 (DIE), 187–192 (KTKPTQ), and Lys-223. UTP contacts are provided by residues 187-192 (KTKPTQ) and Lys-223. Residue 239–241 (KDV) participates in ATP binding. Residues 291 to 542 (TIGMVGKYIE…IAASYAYQKR (252 aa)) form the Glutamine amidotransferase type-1 domain. Residue Gly-352 participates in L-glutamine binding. Cys-379 (nucleophile; for glutamine hydrolysis) is an active-site residue. L-glutamine-binding positions include 380-383 (LGMQ), Glu-403, and Arg-470. Catalysis depends on residues His-515 and Glu-517.

This sequence belongs to the CTP synthase family. Homotetramer.

It catalyses the reaction UTP + L-glutamine + ATP + H2O = CTP + L-glutamate + ADP + phosphate + 2 H(+). The catalysed reaction is L-glutamine + H2O = L-glutamate + NH4(+). The enzyme catalyses UTP + NH4(+) + ATP = CTP + ADP + phosphate + 2 H(+). The protein operates within pyrimidine metabolism; CTP biosynthesis via de novo pathway; CTP from UDP: step 2/2. With respect to regulation, allosterically activated by GTP, when glutamine is the substrate; GTP has no effect on the reaction when ammonia is the substrate. The allosteric effector GTP functions by stabilizing the protein conformation that binds the tetrahedral intermediate(s) formed during glutamine hydrolysis. Inhibited by the product CTP, via allosteric rather than competitive inhibition. In terms of biological role, catalyzes the ATP-dependent amination of UTP to CTP with either L-glutamine or ammonia as the source of nitrogen. Regulates intracellular CTP levels through interactions with the four ribonucleotide triphosphates. The protein is CTP synthase of Shewanella frigidimarina (strain NCIMB 400).